A 142-amino-acid chain; its full sequence is MVLSAADKGNVKAAWGKVGGHAAEYGAEALERMFLSFPTTKTYFPHFDLSHGSAQVKGHGAKVAAALTKAVGHLDDLPGALSELSDLHAHKLRVDPVNFKLLSHSLLVTLASHLPNDFTPAVHASLDKFLANVSTVLTSKYR.

The Globin domain maps to 2–142 (VLSAADKGNV…VSTVLTSKYR (141 aa)). Phosphoserine is present on Ser-4. An N6-succinyllysine mark is found at Lys-8 and Lys-12. At Lys-17 the chain carries N6-acetyllysine; alternate. N6-succinyllysine; alternate is present on Lys-17. Residue Tyr-25 is modified to Phosphotyrosine. Phosphoserine is present on Ser-36. Lys-41 carries the post-translational modification N6-succinyllysine. Ser-50 carries the post-translational modification Phosphoserine. His-59 is a binding site for O2. A heme b-binding site is contributed by His-88. A Phosphoserine modification is found at Ser-103. Phosphothreonine is present on Thr-109. Phosphoserine is present on Ser-125. Phosphothreonine is present on residues Thr-135 and Thr-138. Ser-139 is subject to Phosphoserine.

The protein belongs to the globin family. As to quaternary structure, heterotetramer of two alpha chains and two beta chains. As to expression, red blood cells.

Its function is as follows. Involved in oxygen transport from the lung to the various peripheral tissues. The polypeptide is Hemoglobin subunit alpha-I/II (Bison bonasus (European bison)).